The following is a 458-amino-acid chain: MRHQWVANRRGQSNVSQMHYARQGQITEEMDYVAKRENLPADLIREEVARGRMIIPANVNHVNLEPMAIGIASKCKVNANIGASPNSSNIEEELDKLRLAVKYGADTVMDLSTGGGNLDEIRTAIINESSVPIGTVPIYQALESVHGNIENLTADDFLHIIDKHAQQGVDYQTIHAGILIEHLPLVRDRITGIVSRGGGILARWMLHHHKQNPLYTRFNDVIEIFKKHDVSFSLGDSLRPGCTHDASDDAQLAELKTLGQLTRRAWEHDVQVMVEGPGHVPMDQIEFNVRKQMEECSEAPFYVLGPLVTDIAPGYDHITSAIGAAMAGWYGTAMLCYVTPKEHLGLPDAEDVRNGLIAYKIAAHAADIARHRPGARDRDDQLSEARYNFDWNRQFELSLDPERAREYHDETLPADIYKTAEFCSMCGPKFCPMQTKVDADALTELEKFLAKDQVGSAR.

Substrate contacts are provided by residues asparagine 80, methionine 109, tyrosine 139, histidine 175, 195 to 197, 236 to 239, and glutamate 275; these read SRG and DSLR. Position 279 (histidine 279) interacts with Zn(2+). Tyrosine 302 provides a ligand contact to substrate. Histidine 343 contributes to the Zn(2+) binding site. Residues cysteine 423, cysteine 426, and cysteine 431 each coordinate [4Fe-4S] cluster.

It belongs to the ThiC family. [4Fe-4S] cluster is required as a cofactor.

It catalyses the reaction 5-amino-1-(5-phospho-beta-D-ribosyl)imidazole + S-adenosyl-L-methionine = 4-amino-2-methyl-5-(phosphooxymethyl)pyrimidine + CO + 5'-deoxyadenosine + formate + L-methionine + 3 H(+). It participates in cofactor biosynthesis; thiamine diphosphate biosynthesis. In terms of biological role, catalyzes the synthesis of the hydroxymethylpyrimidine phosphate (HMP-P) moiety of thiamine from aminoimidazole ribotide (AIR) in a radical S-adenosyl-L-methionine (SAM)-dependent reaction. In Acaryochloris marina (strain MBIC 11017), this protein is Phosphomethylpyrimidine synthase.